The following is a 467-amino-acid chain: Trigger factor (467 aa).

The region spanning 162 to 243 is the PPIase FKBP-type domain; that stretch reads GDFVSIDLSA…LNSVKERHLP (82 aa). Positions 426–435 are enriched in acidic residues; that stretch reads EEGNELDLDE. Residues 426 to 467 form a disordered region; that stretch reads EEGNELDLDELFGTQAGEEQGEQAEGTEATDEQSAKADAKAE. Positions 436-452 are enriched in low complexity; that stretch reads LFGTQAGEEQGEQAEGT. The span at 458–467 shows a compositional bias: basic and acidic residues; it reads QSAKADAKAE.

The protein belongs to the FKBP-type PPIase family. Tig subfamily.

The protein localises to the cytoplasm. The catalysed reaction is [protein]-peptidylproline (omega=180) = [protein]-peptidylproline (omega=0). Its function is as follows. Involved in protein export. Acts as a chaperone by maintaining the newly synthesized protein in an open conformation. Functions as a peptidyl-prolyl cis-trans isomerase. This Saccharopolyspora erythraea (strain ATCC 11635 / DSM 40517 / JCM 4748 / NBRC 13426 / NCIMB 8594 / NRRL 2338) protein is Trigger factor.